Here is a 400-residue protein sequence, read N- to C-terminus: Argininosuccinate synthase (400 aa).

Residues 10–18 (AYSGGVDTS) and Ala38 contribute to the ATP site. L-citrulline is bound at residue Tyr89. Gly119 lines the ATP pocket. L-aspartate-binding residues include Thr121, Asn125, and Asp126. Residue Asn125 participates in L-citrulline binding. Residues Arg129, Ser177, Glu262, and Tyr274 each contribute to the L-citrulline site.

It belongs to the argininosuccinate synthase family. Type 1 subfamily. As to quaternary structure, homotetramer.

The protein localises to the cytoplasm. The catalysed reaction is L-citrulline + L-aspartate + ATP = 2-(N(omega)-L-arginino)succinate + AMP + diphosphate + H(+). It participates in amino-acid biosynthesis; L-arginine biosynthesis; L-arginine from L-ornithine and carbamoyl phosphate: step 2/3. In Trichodesmium erythraeum (strain IMS101), this protein is Argininosuccinate synthase.